Consider the following 240-residue polypeptide: Putative glycyl-radical enzyme activating enzyme MJ1227 (240 aa).

A Radical SAM core domain is found at 14-232 (IDYPKKASAV…KKYIDNVVIR (219 aa)). Residues Cys-29, Cys-33, and Cys-36 each contribute to the [4Fe-4S] cluster site. S-adenosyl-L-methionine-binding positions include 35–37 (YCH), Gly-71, and 126–128 (FDK).

This sequence belongs to the organic radical-activating enzymes family. [4Fe-4S] cluster serves as cofactor.

It carries out the reaction glycyl-[protein] + reduced [flavodoxin] + S-adenosyl-L-methionine = glycin-2-yl radical-[protein] + semiquinone [flavodoxin] + 5'-deoxyadenosine + L-methionine + H(+). This Methanocaldococcus jannaschii (strain ATCC 43067 / DSM 2661 / JAL-1 / JCM 10045 / NBRC 100440) (Methanococcus jannaschii) protein is Putative glycyl-radical enzyme activating enzyme MJ1227.